We begin with the raw amino-acid sequence, 298 residues long: DNA repair protein RecO (298 aa).

The protein belongs to the RecO family.

Its function is as follows. Involved in DNA repair and RecF pathway recombination. The chain is DNA repair protein RecO from Cupriavidus metallidurans (strain ATCC 43123 / DSM 2839 / NBRC 102507 / CH34) (Ralstonia metallidurans).